Consider the following 160-residue polypeptide: Sperm acrosome-associated protein 5 (160 aa).

The N-terminal stretch at 1 to 21 (MKVCSIVVVILAVLLIAKLDA) is a signal peptide. Residues 22-150 (KIYERCELAK…SEWLKGCSVR (129 aa)) form the C-type lysozyme domain. 4 disulfide bridges follow: Cys-27-Cys-147, Cys-51-Cys-135, Cys-85-Cys-100, and Cys-96-Cys-114. Residue Glu-56 is part of the active site.

This sequence belongs to the glycosyl hydrolase 22 family.

The protein localises to the secreted. The enzyme catalyses Hydrolysis of (1-&gt;4)-beta-linkages between N-acetylmuramic acid and N-acetyl-D-glucosamine residues in a peptidoglycan and between N-acetyl-D-glucosamine residues in chitodextrins.. The sequence is that of Sperm acrosome-associated protein 5 (Spaca5) from Mus musculus (Mouse).